A 540-amino-acid chain; its full sequence is Esterase B1 (540 aa).

C68 and C81 are oxidised to a cystine. Catalysis depends on S191, which acts as the Acyl-ester intermediate. Residues E324 and H442 each act as charge relay system in the active site. N452 carries an N-linked (GlcNAc...) asparagine glycan.

It belongs to the type-B carboxylesterase/lipase family.

It carries out the reaction a carboxylic ester + H2O = an alcohol + a carboxylate + H(+). Functionally, overproduction of nonspecific esterases is a common mechanism of resistance to organophosphate insecticides. This Culex pipiens (House mosquito) protein is Esterase B1 (B1).